The chain runs to 215 residues: Adenylate kinase (215 aa).

ATP is bound at residue 10–15; that stretch reads GAGKGT. An NMP region spans residues 30 to 60; it reads STGDMLRAAIIKAGTEMGKQAKSVIDAGQLV. AMP contacts are provided by residues threonine 31, arginine 36, 58–60, 86–89, and glutamine 93; these read QLV and GFPR. The LID stretch occupies residues 123–160; it reads GRRAHLPSGRTYHVTFNPSKVEGQDDVTGEPLVIREDD. Residues arginine 124 and 133–134 each bind ATP; that span reads TY. AMP contacts are provided by arginine 157 and arginine 168. Residue lysine 201 participates in ATP binding.

It belongs to the adenylate kinase family. As to quaternary structure, monomer.

Its subcellular location is the cytoplasm. It carries out the reaction AMP + ATP = 2 ADP. The protein operates within purine metabolism; AMP biosynthesis via salvage pathway; AMP from ADP: step 1/1. Its function is as follows. Catalyzes the reversible transfer of the terminal phosphate group between ATP and AMP. Plays an important role in cellular energy homeostasis and in adenine nucleotide metabolism. This is Adenylate kinase from Aliivibrio salmonicida (strain LFI1238) (Vibrio salmonicida (strain LFI1238)).